Here is an 86-residue protein sequence, read N- to C-terminus: Large ribosomal subunit protein bL31B (86 aa).

Belongs to the bacterial ribosomal protein bL31 family. Type B subfamily. As to quaternary structure, part of the 50S ribosomal subunit.

This Vibrio campbellii (strain ATCC BAA-1116) protein is Large ribosomal subunit protein bL31B.